Here is a 158-residue protein sequence, read N- to C-terminus: C-type lectin lectoxin-Thr1 (158 aa).

An N-terminal signal peptide occupies residues 1–23 (MGRFIFATLGLLLVAFSINGAKG). 3 disulfide bridges follow: Cys26/Cys37, Cys54/Cys154, and Cys129/Cys146. Residues 33-155 (LKGFCYKVFN…CASTRAYLCK (123 aa)) enclose the C-type lectin domain. Residues 119–121 (EPN) carry the Mannose-binding motif. Residues Glu127, Asn142, and Asp143 each contribute to the Ca(2+) site.

It belongs to the true venom lectin family. Expressed by the venom gland.

It localises to the secreted. Its function is as follows. Mannose-binding lectin which recognizes specific carbohydrate structures and agglutinates a variety of animal cells by binding to cell-surface glycoproteins and glycolipids. May be a calcium-dependent lectin. The sequence is that of C-type lectin lectoxin-Thr1 from Thrasops jacksonii (Jackson's black tree snake).